The chain runs to 209 residues: Nucleoside triphosphate pyrophosphatase (209 aa).

The active-site Proton acceptor is D74.

Belongs to the Maf family. A divalent metal cation is required as a cofactor.

Its subcellular location is the cytoplasm. The catalysed reaction is a ribonucleoside 5'-triphosphate + H2O = a ribonucleoside 5'-phosphate + diphosphate + H(+). The enzyme catalyses a 2'-deoxyribonucleoside 5'-triphosphate + H2O = a 2'-deoxyribonucleoside 5'-phosphate + diphosphate + H(+). Nucleoside triphosphate pyrophosphatase. May have a dual role in cell division arrest and in preventing the incorporation of modified nucleotides into cellular nucleic acids. In Neorickettsia sennetsu (strain ATCC VR-367 / Miyayama) (Ehrlichia sennetsu), this protein is Nucleoside triphosphate pyrophosphatase.